A 262-amino-acid polypeptide reads, in one-letter code: Thioredoxin-like protein HCF164, chloroplastic (262 aa).

The transit peptide at 1 to 54 (MAVVASRCTGLLLPDLGASLAGFRRRRSTPASSLSFRPRRARRRLGSLSCIAPP) directs the protein to the chloroplast. The disordered stretch occupies residues 47–90 (SLSCIAPPDSAEPQTDEPAAKDDSTEDKAEASSASQDAGNPTFP). Positions 64 to 76 (PAAKDDSTEDKAE) are enriched in basic and acidic residues. Positions 78–89 (SSASQDAGNPTF) are enriched in polar residues. The Thioredoxin domain occupies 78-230 (SSASQDAGNP…FLDNVVALAS (153 aa)). Catalysis depends on nucleophile residues Cys151 and Cys154. A disulfide bond links Cys151 and Cys154.

It belongs to the thioredoxin family.

The protein localises to the plastid. It localises to the chloroplast. In terms of biological role, probable thiol-disulfide oxidoreductase that may participate in various redox reactions in the chloroplast. The polypeptide is Thioredoxin-like protein HCF164, chloroplastic (Oryza sativa subsp. japonica (Rice)).